The following is a 673-amino-acid chain: uncharacterized protein (673 aa).

The Cytoplasmic portion of the chain corresponds to 1-208; the sequence is MSTHSNDYFS…STGQLELPPD (208 aa). S57, S112, and S172 each carry phosphoserine. A helical membrane pass occupies residues 209-229; that stretch reads GGYGWVVTFCVFLTMFSTWGC. N-linked (GlcNAc...) asparagine glycosylation is present at N230. At 230–255 the chain is on the lumenal side; it reads NASFGVDLAYYLNHDTYPGASKYDYA. The chain crosses the membrane as a helical span at residues 256-276; the sequence is LIAGLTVFLGQLLSPLVMALM. Residue R277 is a topological domain, cytoplasmic. Residues 278–298 traverse the membrane as a helical segment; that stretch reads IIGLRTTMLFGDAVMLAAYLL. Residues 299 to 315 are Lumenal-facing; it reads ASFTTKLWQLYVTQGFM. Residues 316-336 form a helical membrane-spanning segment; that stretch reads VGCSISLIFVPATTVLPGWFL. At 337–339 the chain is on the cytoplasmic side; sequence KKR. The chain crosses the membrane as a helical span at residues 340 to 360; the sequence is AVAMGVSLLGTGAGGVVYGLA. The Lumenal portion of the chain corresponds to 361 to 372; sequence TNKMLSDFGNTR. The helical transmembrane segment at 373 to 393 threads the bilayer; sequence WCLRIIGISCSISVLVAIALL. Residues 394–426 lie on the Cytoplasmic side of the membrane; that stretch reads KERNPTPAIGLKSPRAMFEQLKAMFSLKVITKP. The chain crosses the membrane as a helical span at residues 427–447; it reads FVVLIALWFMFALFAYNMMVF. The Lumenal portion of the chain corresponds to 448-504; sequence TLSSYAISKGLSSHDASTLTAILNGSQSIGRPLMGLAGDKFGRANVTIVLTTLLTIY. Residues N471 and N492 are each glycosylated (N-linked (GlcNAc...) asparagine). The chain crosses the membrane as a helical span at residues 505 to 525; the sequence is MFAFWIPAHTFVQLIFFSILV. The Cytoplasmic segment spans residues 526–549; the sequence is GSCVGVANVMNTVLIADMVKPEEF. The chain crosses the membrane as a helical span at residues 550–570; sequence LPAWAFVNYCGAPFLLVCEVI. At 571–584 the chain is on the lumenal side; that stretch reads AQALTVEKDKSNPY. The chain crosses the membrane as a helical span at residues 585–605; that stretch reads LHAQIFCGCCFIAALILISIL. Residues 606-673 are Cytoplasmic-facing; the sequence is REYSIRMKLT…FLRMVYPMKV (68 aa). S637 carries the phosphoserine modification.

This sequence belongs to the major facilitator superfamily. Monocarboxylate porter (TC 2.A.1.13) family.

It is found in the endoplasmic reticulum membrane. This is an uncharacterized protein from Saccharomyces cerevisiae (strain ATCC 204508 / S288c) (Baker's yeast).